Reading from the N-terminus, the 412-residue chain is MAFLCQRDSYAREFTTTVVSCSPAELQTDASGGKKEVLSGFHVVLEDTLLFPEGGGQPDDRGTINDISVLRVTRRGAQADHFTESPLSPGSQVQVRVDWERRFDHMQQHSGQHLITAVADLLFGLKTTSWELGRLRSVIELDSPSVTAEQVAAIEQSVNQKIRDRLPVSVRELSLDDPEVEQVRGRGLPDDHAGPIRVVTIEGVDSNMCCGTHVSNLSDLQVIKILGTEKGKKNKSNLIFLAGNRVLKWMERSHGSEKALTSLLKCGVEDHVEAVKKLQNATKLLQKNNLNLLRDLAVHTAHSLRSSPAWGGVVTLHRKEGDSEFMNIIANEIGSEETLLFLTVGDEKGAGLFLLAGPAEAVETLGPRVAEVLEGKGAGKKGRFQGKATKMSRRAEAQALLQDYVSTQSAEE.

Zn(2+) is bound by residues histidine 109 and histidine 113. Serine 174 carries the phosphoserine modification. Positions 209 and 213 each coordinate Zn(2+).

This sequence belongs to the class-II aminoacyl-tRNA synthetase family. Alax-L subfamily. It depends on Zn(2+) as a cofactor.

The protein resides in the cytoplasm. In terms of biological role, functions in trans to edit the amino acid moiety from incorrectly charged Ser-tRNA(Ala). This is Alanyl-tRNA editing protein Aarsd1 (Aarsd1) from Mus musculus (Mouse).